A 66-amino-acid chain; its full sequence is Ocellatin-PT5 (66 aa).

The N-terminal stretch at 1-22 is a signal peptide; it reads MAFLKKSLFLVLFLGLVSLSIC. Residues 23 to 39 constitute a propeptide that is removed on maturation; the sequence is DEEKRQDEDDDDDDDEE. Val66 bears the Valine amide mark.

As to expression, expressed by the skin glands.

The protein localises to the secreted. In terms of biological role, has antibacterial activity against Gram-negative bacterium E.coli ATCC 25922 (MIC=300 uM) but not against S.pneumoniae ATCC 700603, S.choleraesuis ATCC 14028 or Gram-positive bacterium S.aureus ATCC 29313. Shows very little hemolytic activity and no cytotoxicity. The polypeptide is Ocellatin-PT5 (Leptodactylus pustulatus (Ceara white-lipped frog)).